Consider the following 53-residue polypeptide: Minor histocompatibility protein HMSD variant form (53 aa).

In terms of assembly, ACC-6 forms a complex with MHC HLA-B*4403. In terms of tissue distribution, highly expressed in dendritic cells and primary leukemia cells, especially those of myeloid lineage. ACC-6 expression is limited to cells of the hematopoietic lineage.

This splice variant of HMSD is the precursor of the histocompatibility antigen ACC-6. More generally, minor histocompatibility antigens (mHags) refer to immunogenic peptide which, when complexed with MHC, can generate an immune response after recognition by specific T-cells. The peptides are derived from polymorphic intracellular proteins, which are cleaved by normal pathways of antigen processing. The binding of these peptides to MHC class I or class II molecules and its expression on the cell surface can stimulate T-cell responses and thereby trigger graft rejection or graft-versus-host disease (GVHD) after hematopoietic stem cell transplantation from HLA-identical sibling donor. GVHD is a frequent complication after bone marrow transplantation (BMT), due to mismatch of minor histocompatibility antigen in HLA-matched sibling marrow transplants. However, associated with GVHD, a favorable graft-versus-leukemia (GVL) can be induced by donor-recipient disparities in mHags. ACC-6 is presented to the cell surface by MHC HLA-B*4403. This complex specifically elicits donor-cytotoxic T-lymphocyte (CTL) reactivity against hematologic malignancies after treatment by HLA-identical allogenic BMT. It induces cell recognition and lysis by CTL. Immunogenicity of most autosomal mHags results from single-nucleotide polymorphisms that cause amino-acid substitutions within epitopes, leading to the differential recognition of peptides between donor and recipient. The protein is Minor histocompatibility protein HMSD variant form (HMSD) of Homo sapiens (Human).